We begin with the raw amino-acid sequence, 566 residues long: Hexose transporter 2 (566 aa).

The tract at residues 1–39 (MSELETGTAAHGTPVENKSVSSSQASTPTNVGSRDDLKV) is disordered. The segment covering 16–32 (ENKSVSSSQASTPTNVG) has biased composition (polar residues). Topologically, residues 22 to 61 (SSQASTPTNVGSRDDLKVDDDNHSVDAIELPKKPRSAYIT) are cytoplasmic. Residues 62 to 82 (VSILCLMVAFGGFVFGWDTGT) form a helical membrane-spanning segment. At 83–112 (ISGFVNQTDFIRRFGQEKADGSHYLSNVRT) the chain is on the extracellular side. A glycan (N-linked (GlcNAc...) asparagine) is linked at Asn-88. The helical transmembrane segment at 113-133 (GLIVSIFNIGCAIGGIILSKL) threads the bilayer. At 134-140 (GDMYGRR) the chain is on the cytoplasmic side. Residues 141–161 (IGLMIVVLIYVVGIIIQIASI) traverse the membrane as a helical segment. Residues 162–166 (DKWYQ) are Extracellular-facing. A helical membrane pass occupies residues 167–187 (YFIGRIISGLGVGGISVLSPM). Residues 188–198 (LISETAPKHIR) are Cytoplasmic-facing. Residues 199-219 (GTLVSFYQLMITFGIFLGYCT) traverse the membrane as a helical segment. Residues 220–233 (NYGTKTYSNSVQWR) lie on the Extracellular side of the membrane. Residues 234-254 (VPLGLCFAWAIFMITGMLFVP) traverse the membrane as a helical segment. Over 255 to 333 (ESPRFLVEKD…MGMLIQSFQQ (79 aa)) the chain is Cytoplasmic. Residues 334–353 (LTGNNYFFYYGTTIFNSVGM) traverse the membrane as a helical segment. Over 354 to 357 (DDSF) the chain is Extracellular. Residues 358-378 (ETSIVLGIVNFASTFVAIYVV) traverse the membrane as a helical segment. The Cytoplasmic segment spans residues 379-385 (DKFGRRK). The chain crosses the membrane as a helical span at residues 386–406 (CLLWGAAAMTACMVVFASVGV). Topologically, residues 407–428 (TRLWPDGANHPETASKGAGNCM) are extracellular. Residues 429–449 (IVFACFYIFCFATSWAPIAYV) form a helical membrane-spanning segment. At 450 to 465 (VVAESYPLRVKAKCMA) the chain is on the cytoplasmic side. The chain crosses the membrane as a helical span at residues 466-486 (IATASNWIWGFLNGFFTPFIT). Residues 487–492 (SAIHFY) are Extracellular-facing. The helical transmembrane segment at 493–513 (YGYVFMGCLVAMFFYVFFFVP) threads the bilayer. The Cytoplasmic portion of the chain corresponds to 514–566 (ETKGLTLEEVQEMWEEGVLPWKSSSWVPSSRRNAGYDVDALQHDEKPWYKAML).

This sequence belongs to the major facilitator superfamily. Sugar transporter (TC 2.A.1.1) family.

It localises to the membrane. Probable glucose transporter. This chain is Hexose transporter 2 (KHT2), found in Kluyveromyces lactis (Yeast).